A 751-amino-acid polypeptide reads, in one-letter code: Polyribonucleotide nucleotidyltransferase (751 aa).

D528 and D534 together coordinate Mg(2+). The KH domain maps to 594–653; the sequence is PRVISVTVPVSKIGEVIGPKGKMINQIQEDTGTDISIEDDGTVYIGATDGPSAEAARSAI. The S1 motif domain occupies 665 to 737; it reads GERYLGTVVK…DRGKLSLAPV (73 aa).

Belongs to the polyribonucleotide nucleotidyltransferase family. The cofactor is Mg(2+).

It is found in the cytoplasm. The enzyme catalyses RNA(n+1) + phosphate = RNA(n) + a ribonucleoside 5'-diphosphate. Functionally, involved in mRNA degradation. Catalyzes the phosphorolysis of single-stranded polyribonucleotides processively in the 3'- to 5'-direction. The protein is Polyribonucleotide nucleotidyltransferase of Kocuria rhizophila (strain ATCC 9341 / DSM 348 / NBRC 103217 / DC2201).